A 440-amino-acid chain; its full sequence is Protein CapE (440 aa).

The next 12 membrane-spanning stretches (helical) occupy residues 7–27 (VILIINFVTVLFSIFTFIGYL), 31–51 (IGFRVVTISLCITIAMTVYLL), 60–80 (LVYLIYLFLTNFGVFVTNIFL), 102–122 (FSIATFAILTFTILSNFISVF), 141–161 (FYYTGILFIIGFTIQFLFYII), 179–199 (ELPMYTYGIFFFSIGIAFAFS), 204–224 (THIKYLVIILTPQVLFFLITG), 249–269 (WWMIITIVFTLFFVIPFIKVF), 324–344 (IFSYIIPGLQPVNYEMVGYGF), 360–380 (YYNGAIVGVLIVMVLLVLLLW), 382–402 (FTNFKSFEMLSMGTAIVSVLI), and 409–429 (FSFVPAYILIIIVIVIILLFI).

The protein localises to the cell membrane. It functions in the pathway capsule biogenesis; capsule polysaccharide biosynthesis. Functionally, required for the biosynthesis of type 1 capsular polysaccharide. This Staphylococcus aureus protein is Protein CapE (capE).